An 89-amino-acid polypeptide reads, in one-letter code: Small ribosomal subunit protein bS20 (89 aa).

This sequence belongs to the bacterial ribosomal protein bS20 family.

Its function is as follows. Binds directly to 16S ribosomal RNA. This chain is Small ribosomal subunit protein bS20, found in Phenylobacterium zucineum (strain HLK1).